The primary structure comprises 271 residues: Formamidopyrimidine-DNA glycosylase (271 aa).

Pro2 acts as the Schiff-base intermediate with DNA in catalysis. Residue Glu3 is the Proton donor of the active site. The Proton donor; for beta-elimination activity role is filled by Lys58. The DNA site is built by His92, Arg111, and Arg152. The FPG-type zinc-finger motif lies at 237-271 (MVYGREGQACKHCGRELKHATIGQRATVWCAACQR). Arg261 acts as the Proton donor; for delta-elimination activity in catalysis.

This sequence belongs to the FPG family. As to quaternary structure, monomer. It depends on Zn(2+) as a cofactor.

The catalysed reaction is Hydrolysis of DNA containing ring-opened 7-methylguanine residues, releasing 2,6-diamino-4-hydroxy-5-(N-methyl)formamidopyrimidine.. It catalyses the reaction 2'-deoxyribonucleotide-(2'-deoxyribose 5'-phosphate)-2'-deoxyribonucleotide-DNA = a 3'-end 2'-deoxyribonucleotide-(2,3-dehydro-2,3-deoxyribose 5'-phosphate)-DNA + a 5'-end 5'-phospho-2'-deoxyribonucleoside-DNA + H(+). Functionally, involved in base excision repair of DNA damaged by oxidation or by mutagenic agents. Acts as a DNA glycosylase that recognizes and removes damaged bases. Has a preference for oxidized purines, such as 7,8-dihydro-8-oxoguanine (8-oxoG). Has AP (apurinic/apyrimidinic) lyase activity and introduces nicks in the DNA strand. Cleaves the DNA backbone by beta-delta elimination to generate a single-strand break at the site of the removed base with both 3'- and 5'-phosphates. The protein is Formamidopyrimidine-DNA glycosylase of Xanthomonas campestris pv. campestris (strain B100).